We begin with the raw amino-acid sequence, 450 residues long: Phosphoglucosamine mutase (450 aa).

S101 functions as the Phosphoserine intermediate in the catalytic mechanism. Mg(2+)-binding residues include S101, D240, D242, and D244. The residue at position 101 (S101) is a Phosphoserine.

Belongs to the phosphohexose mutase family. It depends on Mg(2+) as a cofactor. Post-translationally, activated by phosphorylation.

It catalyses the reaction alpha-D-glucosamine 1-phosphate = D-glucosamine 6-phosphate. Its function is as follows. Catalyzes the conversion of glucosamine-6-phosphate to glucosamine-1-phosphate. The protein is Phosphoglucosamine mutase of Streptococcus pneumoniae (strain JJA).